The sequence spans 340 residues: Delta-aminolevulinic acid dehydratase (340 aa).

Residues cysteine 133, cysteine 135, and cysteine 143 each contribute to the Zn(2+) site. The active-site Schiff-base intermediate with substrate is the lysine 210. Residues arginine 220 and arginine 232 each contribute to the 5-aminolevulinate site. Lysine 263 acts as the Schiff-base intermediate with substrate in catalysis. Serine 290 and tyrosine 329 together coordinate 5-aminolevulinate.

Belongs to the ALAD family. In terms of assembly, homooctamer. Zn(2+) is required as a cofactor.

The enzyme catalyses 2 5-aminolevulinate = porphobilinogen + 2 H2O + H(+). It participates in porphyrin-containing compound metabolism; protoporphyrin-IX biosynthesis; coproporphyrinogen-III from 5-aminolevulinate: step 1/4. Catalyzes an early step in the biosynthesis of tetrapyrroles. Binds two molecules of 5-aminolevulinate per subunit, each at a distinct site, and catalyzes their condensation to form porphobilinogen. This is Delta-aminolevulinic acid dehydratase (HEM2) from Candida glabrata (strain ATCC 2001 / BCRC 20586 / JCM 3761 / NBRC 0622 / NRRL Y-65 / CBS 138) (Yeast).